The primary structure comprises 894 residues: CWF19-like protein 2 (894 aa).

The interval 1–147 (MATSMAAASG…DEKSGKDDTQ (147 aa)) is disordered. Residues 13-56 (ESAKSIEERKEQTRNARAEVLRQAKANFEKEERRKELKRLRGED) are compositionally biased toward basic and acidic residues. Positions 13 to 107 (ESAKSIEERK…KKQKYEKNNE (95 aa)) form a coiled coil. At S75 the chain carries Phosphoserine. Positions 76–99 (VKKKKKKDKHSKKAKKEKKKKSKK) are enriched in basic residues. A compositionally biased stretch (basic and acidic residues) spans 128–147 (PDKEKAWKVKDEKSGKDDTQ). Positions 166–281 (SSSSLKAEKE…AEKAASTKED (116 aa)) form a coiled coil. K171 participates in a covalent cross-link: Glycyl lysine isopeptide (Lys-Gly) (interchain with G-Cter in SUMO2). Basic and acidic residues predominate over residues 270–284 (EDAEKAASTKEDYRR). Residues 270–483 (EDAEKAASTK…STFAGSPERE (214 aa)) are disordered. The segment covering 320–330 (TTDTAKNSNNE) has biased composition (polar residues). Basic and acidic residues predominate over residues 332–352 (FIGDEKDKRPGSLETCRRESN). A phosphoserine mark is found at S360 and S372. 2 stretches are compositionally biased toward basic and acidic residues: residues 410–430 (KNSE…DKKH) and 440–473 (TDEH…RDTK). Phosphoserine is present on residues S479 and S484. Positions 502-530 (KAEMMGNMELAEQLKVQLEKANKFKETIT) form a coiled coil. The disordered stretch occupies residues 561 to 583 (NTPGKSLESQGGRRKRQMVSTHE). K604 participates in a covalent cross-link: Glycyl lysine isopeptide (Lys-Gly) (interchain with G-Cter in SUMO2). The stretch at 644-675 (AAERERLGEEEENQRKKAIAEHRSLAAQMEKC) forms a coiled coil.

Belongs to the CWF19 family.

This Homo sapiens (Human) protein is CWF19-like protein 2 (CWF19L2).